The following is a 340-amino-acid chain: Serine racemase (340 aa).

Mg(2+) is bound at residue Glu13. Positions 31, 32, 33, 51, and 52 each coordinate ATP. Lys56 acts as the Proton acceptor in catalysis. Lys56 bears the N6-(pyridoxal phosphate)lysine mark. The Ca(2+) site is built by Pro69 and Thr81. Ser84 functions as the Proton acceptor in the catalytic mechanism. Residue Asn86 participates in pyridoxal 5'-phosphate binding. Gln89 provides a ligand contact to ATP. Cys113 carries the S-nitrosocysteine modification. Position 121 (Tyr121) interacts with ATP. Residue Asn154 participates in pyridoxal 5'-phosphate binding. Asp178 contributes to the Mg(2+) binding site. Residues Gly185, Gly186, Gly187, Gly188, and Met189 each coordinate pyridoxal 5'-phosphate. 4 residues coordinate Mg(2+): Glu210, Ala214, Asp216, and Asn247. Ca(2+) contacts are provided by Glu210, Ala214, Asp216, and Asn247. Glu210, Ala214, and Asp216 together coordinate Mn(2+). ATP is bound at residue Lys279. Residue Ser313 participates in pyridoxal 5'-phosphate binding. Asn316 is a binding site for ATP.

Belongs to the serine/threonine dehydratase family. Homodimer. Mg(2+) is required as a cofactor. The cofactor is Mn(2+). Requires Ca(2+) as cofactor. It depends on pyridoxal 5'-phosphate as a cofactor. S-nitrosylated, leading to decrease the enzyme activity. In terms of tissue distribution, expressed in the cerebellum, hippocampus, dorsolateral prefrontal cortex, and in motor neurons and glial cells of the lumbar spinal cord (at protein level). Increased in the dorsolateral prefrontal cortex of schizophrenic patients (at protein level). Brain: expressed at high levels in hippocampus and corpus callosum, intermediate levels in substantia nigra and caudate, and low levels in amygdala, thalamus, and subthalamic nuclei. Expressed in heart, skeletal muscle, kidney, and liver.

The catalysed reaction is L-serine = D-serine. The enzyme catalyses D-serine = pyruvate + NH4(+). It catalyses the reaction L-serine = pyruvate + NH4(+). Its activity is regulated as follows. Allosterically activated by magnesium, and possibly also other divalent metal cations. Allosterically activated by ATP, ADP or GTP. Competitively inhibited by malonate. Inhibited by meso-tartrate and malonate. In terms of biological role, catalyzes the synthesis of D-serine from L-serine. D-serine is a key coagonist with glutamate at NMDA receptors. Has dehydratase activity towards both L-serine and D-serine. This Homo sapiens (Human) protein is Serine racemase (SRR).